We begin with the raw amino-acid sequence, 348 residues long: MPHIDNDVKLDFKDVLLRPKRSTLKSRSEVDLTRSFSFRNSKQTYSGVPIIAANMDTVGTFEMAKVLCKFSLFTAVHKHYSLVQWQEFAGQNPDCLEHLAASSGTGSSDFEQLEQILEAIPQVKYICLDVANGYSEHFVEFVKDVRKRFPQHTIMAGNVVTGEMVEELILSGADIIKVGIGPGSVCTTRKKTGVGYPQLSAVMECADAAHGLKGHIISDGGCSCPGDVAKAFGAGADFVMLGGMLAGHSESGGELIERDGKKYKLFYGMSSEMAMKKYAGGVAEYRASEGKTVEVPFKGDVEHTIRDILGGIRSTCTYVGAAKLKELSRRTTFIRVTQQVNPIFSEAC.

Residues Ser26 to Arg27, Lys78, Asp129 to Ala131, and Ile180 to Gly181 each bind NADP(+). Positions 181, 183, and 186 each coordinate K(+). The active-site Thioimidate intermediate is Cys186. Catalysis depends on Thr188, which acts as the Proton donor/acceptor. Arg189 is a K(+) binding site. GMP-binding positions include Asp219–Gly221, Gly242–Gly243, Gly268–Ser270, and Arg286–Gly290. Residues Met269 and Tyr285–Arg286 each bind NADP(+). Residue Lys291 is modified to N6-acetyllysine. Ser314–Thr317 contributes to the NADP(+) binding site.

It belongs to the IMPDH/GMPR family. GuaC type 1 subfamily. As to quaternary structure, homotetramer. As to expression, highly expressed in heart, skeletal muscle, kidney, brain, liver, prostate, spleen, placenta, testis and ovary. Low expression in colon, thymus and peripheral blood leukocytes.

It carries out the reaction IMP + NH4(+) + NADP(+) = GMP + NADPH + 2 H(+). Its function is as follows. Catalyzes the irreversible NADPH-dependent deamination of GMP to IMP. It functions in the conversion of nucleobase, nucleoside and nucleotide derivatives of G to A nucleotides, and in maintaining the intracellular balance of A and G nucleotides. Plays a role in modulating cellular differentiation. This chain is GMP reductase 2, found in Homo sapiens (Human).